The following is a 641-amino-acid chain: Epsin-2 (641 aa).

6 residues coordinate a 1,2-diacyl-sn-glycero-3-phospho-(1D-myo-inositol-4,5-bisphosphate): R8, K11, R25, N30, R63, and H73. Residues 12 to 144 (NIVNNYSEAE…KDEERLKAER (133 aa)) enclose the ENTH domain. R153 and Q156 each carry phosphoserine. The span at 163 to 181 (SNQITFGRGSSQPNLSTSH) shows a compositional bias: polar residues. Disordered regions lie at residues 163 to 214 (SNQI…GAPL) and 255 to 275 (RATS…TSGE). R170 carries the omega-N-methylarginine modification. Residues S173, S192, and S195 each carry the phosphoserine modification. Over residues 259 to 273 (PRVSSELEQARPQTS) the composition is skewed to polar residues. UIM domains are found at residues 275–294 (EEEL…AEQE) and 300–319 (GDDL…TVKI). The disordered stretch occupies residues 340–425 (ALPSSGPAAQ…QPASSAGKRA (86 aa)). Repeat copies occupy residues 352–354 (EPW), 364–366 (NPW), 377–379 (DPW), 391–393 (DPW), 409–411 (DPW), and 427–429 (DAW). The tract at residues 352–639 (EPWGPSASTN…AQATGTTNPF (288 aa)) is 6 X 3 AA repeats of [DE]-P-W. Low complexity predominate over residues 408-421 (SDPWAASQQPASSA). The tract at residues 470 to 512 (TAESVTSLPSQNNGTTSPDPFESQPLTVASSKPSSARKTPESF) is disordered. Over residues 472-506 (ESVTSLPSQNNGTTSPDPFESQPLTVASSKPSSAR) the composition is skewed to polar residues. Phosphoserine is present on S486. A Phosphothreonine modification is found at T508. 2 repeat units span residues 537–539 (NPF) and 552–554 (NPF). Residues 537 to 639 (NPFLAPGAPA…AQATGTTNPF (103 aa)) form a 3 X 3 AA repeats of N-P-F region. S570 is subject to Phosphoserine. Copy 3 of the repeat occupies 637–639 (NPF).

This sequence belongs to the epsin family. As to quaternary structure, binds EPS15. Interacts with ITSN1. Binds AP-2 and clathrin. Interacts with UBQLN2. Post-translationally, ubiquitinated. Highest expression is found in brain. Detected at lower levels in lung and liver.

The protein resides in the cytoplasm. It is found in the cytoplasmic vesicle. The protein localises to the clathrin-coated vesicle. In terms of biological role, plays a role in the formation of clathrin-coated invaginations and endocytosis. This is Epsin-2 (EPN2) from Homo sapiens (Human).